The following is a 504-amino-acid chain: Anthocyanidin 3-O-glucoside 5-O-glucosyltransferase (504 aa).

The active-site Proton acceptor is His23. An an anthocyanidin-binding site is contributed by His23. The segment at Thr107–Gly126 is disordered. Residues Gln111–Gln125 show a composition bias toward gly residues. UDP-alpha-D-glucose contacts are provided by Thr157, Gln377, His392, Trp395, Asn396, Ser397, Glu400, Asp416, and Gln417.

Belongs to the UDP-glycosyltransferase family. In terms of tissue distribution, predominantly expressed in petals and weakly in filaments. Not expressed in leaves, stems and other floral organs.

The catalysed reaction is an anthocyanidin 3-O-beta-D-glucoside + UDP-alpha-D-glucose = an anthocyanidin 3,5-di-O-beta-D-glucoside + UDP + 2 H(+). It participates in pigment biosynthesis; anthocyanin biosynthesis. In terms of biological role, catalyzes the glucosylation at the O-5 position of anthocyanidin 3-glucosides to form anthocyanidin 3,5-di-O-glucosides using UDP-glucose as sugar donor. Anthocyanidin 3,5-di-O-glucosides are molecules that are responsible for pigmentation. Involved in biosynsthesis of accumulate gentiodelphin, a unique polyacylated delphinidin-type anthocyanin, in the petals. Also acts on anthocyanidin 3-O-(6-O-malonylglucoside). Much less active with hydroxycinnamoylglucose derivatives. No activity in the absence of the 3-O-glucoside group. The sequence is that of Anthocyanidin 3-O-glucoside 5-O-glucosyltransferase (5GT7) from Gentiana triflora (Clustered gentian).